Reading from the N-terminus, the 443-residue chain is 3-phosphoshikimate 1-carboxyvinyltransferase (443 aa).

The interval 1–22 (MSHASRPTPLEARGSTPLTGRV) is disordered. Residues lysine 28, serine 29, and arginine 33 each contribute to the 3-phosphoshikimate site. Phosphoenolpyruvate is bound at residue lysine 28. Phosphoenolpyruvate-binding residues include glycine 101 and arginine 129. Residues serine 174, glutamine 176, aspartate 326, and lysine 353 each coordinate 3-phosphoshikimate. Glutamine 176 contacts phosphoenolpyruvate. The active-site Proton acceptor is the aspartate 326. Phosphoenolpyruvate-binding residues include arginine 357 and arginine 400.

The protein belongs to the EPSP synthase family. In terms of assembly, monomer.

The protein resides in the cytoplasm. The catalysed reaction is 3-phosphoshikimate + phosphoenolpyruvate = 5-O-(1-carboxyvinyl)-3-phosphoshikimate + phosphate. The protein operates within metabolic intermediate biosynthesis; chorismate biosynthesis; chorismate from D-erythrose 4-phosphate and phosphoenolpyruvate: step 6/7. Functionally, catalyzes the transfer of the enolpyruvyl moiety of phosphoenolpyruvate (PEP) to the 5-hydroxyl of shikimate-3-phosphate (S3P) to produce enolpyruvyl shikimate-3-phosphate and inorganic phosphate. This Afipia carboxidovorans (strain ATCC 49405 / DSM 1227 / KCTC 32145 / OM5) (Oligotropha carboxidovorans) protein is 3-phosphoshikimate 1-carboxyvinyltransferase.